A 420-amino-acid chain; its full sequence is Glycogen synthase kinase-3 beta (420 aa).

A compositionally biased stretch (polar residues) spans 1–22 (MSGRPRTTSFAESCKPVQQPSA). The interval 1-53 (MSGRPRTTSFAESCKPVQQPSAFGSMKVSRDKDGSKVTTVVATPGQGPDRPQE) is disordered. At S9 the chain carries Phosphoserine; by PKB/AKT1, RPS6KA3 and SGK3. C14 carries the S-palmitoyl cysteine lipid modification. The region spanning 56–340 (YTDTKVIGNG…PLEACAHSFF (285 aa)) is the Protein kinase domain. ATP is bound by residues 62–70 (IGNGSFGVV) and K85. D181 functions as the Proton acceptor in the catalytic mechanism. Y216 carries the phosphotyrosine modification. Positions 385-420 (QAAASPPANATAASDTNAGDRGQTNNAASASASNST) are disordered. Low complexity-rich tracts occupy residues 386–401 (AAAS…SDTN) and 409–420 (NNAASASASNST). Phosphoserine is present on S389.

Belongs to the protein kinase superfamily. CMGC Ser/Thr protein kinase family. GSK-3 subfamily. Monomer. Interacts with DAB2IP (via C2 domain); the interaction stimulates GSK3B kinase activation. Interacts (via C2 domain) with PPP2CA. Interacts with CABYR, MMP2, MUC1, NIN and PRUNE1. Interacts with AXIN1; the interaction mediates hyperphosphorylation of CTNNB1 leading to its ubiquitination and destruction. Interacts with and phosphorylates SNAI1. Interacts with DNM1L (via a C-terminal domain). Interacts with ARRB2. Interacts with DISC1. Found in a complex composed of MACF1, APC, AXIN1, CTNNB1 and GSK3B. Interacts with SGK3. Interacts with the CLOCK-BMAL1 heterodimer. Interacts with ZBED3. Interacts with the BMAL1. The complex composed, at least, of APC, CTNNB1 and GSK3B interacts with JPT1; the interaction requires the inactive form of GSK3B (phosphorylated at 'Ser-9'). Forms a complex composed of PRKAR2A or PRKAR2B, GSK3B and GSKIP through GSKIP interaction; facilitates PKA-induced phosphorylation and regulates GSK3B activity. Interacts with GSKIP. Interacts with GID8. Interacts with PIWIL2. Interacts with LMBR1L. Interacts with DDX3X. Interacts with BIRC2. Interacts with TNFRSF10B; TNFRSF10B stimulation inhibits GSK3B kinase activity. Found in a complex with SLC39A6, SLC39A10 and with GSK3B that controls NCAM1 phosphorylation. Interacts with PKP3 (via ARM repeats); the interaction may be involved in PKP3 protein degradation. Post-translationally, phosphorylated by AKT1 and ILK1. Upon insulin-mediated signaling, the activated PKB/AKT1 protein kinase phosphorylates and deactivates GSK3B, resulting in the dephosphorylation and activation of GYS1. Activated by phosphorylation at Tyr-216. Phosphorylation of Ser-9 in the hippocampus peaks at CT0, whereas in the liver it peaks at CT12. Inactivated by phosphorylation at Ser-9. Phosphorylated in a circadian manner in the hippocampus. Mono-ADP-ribosylation by PARP10 negatively regulates kinase activity. In terms of processing, palmitoylated. Palmitoylation by ZDHHC4 prevents AKT1-mediated phosphorylation. In terms of tissue distribution, expressed in the liver (at protein level).

The protein localises to the cytoplasm. Its subcellular location is the nucleus. It localises to the cell membrane. The catalysed reaction is L-seryl-[tau protein] + ATP = O-phospho-L-seryl-[tau protein] + ADP + H(+). It catalyses the reaction L-threonyl-[tau protein] + ATP = O-phospho-L-threonyl-[tau protein] + ADP + H(+). It carries out the reaction L-seryl-[protein] + ATP = O-phospho-L-seryl-[protein] + ADP + H(+). The enzyme catalyses L-threonyl-[protein] + ATP = O-phospho-L-threonyl-[protein] + ADP + H(+). Activated by phosphorylation at Tyr-216. In response to insulin, inhibited by phosphorylation at Ser-9 by PKB/AKT1 and RPS6KA3; phosphorylation at this site causes a conformational change, preventing access of substrates to the active site. Inhibited by IL22 treatment which also triggers phosphorylation at Ser-9, promoting inactivation. Inhibited by lithium. Functionally, constitutively active protein kinase that acts as a negative regulator in the hormonal control of glucose homeostasis, Wnt signaling and regulation of transcription factors and microtubules, by phosphorylating and inactivating glycogen synthase (GYS1 or GYS2), EIF2B, CTNNB1/beta-catenin, APC, AXIN1, DPYSL2/CRMP2, JUN, NFATC1/NFATC, MAPT/TAU and MACF1. Requires primed phosphorylation of the majority of its substrates. In skeletal muscle, contributes to insulin regulation of glycogen synthesis by phosphorylating and inhibiting GYS1 activity and hence glycogen synthesis. May also mediate the development of insulin resistance by regulating activation of transcription factors. Regulates protein synthesis by controlling the activity of initiation factor 2B (EIF2BE/EIF2B5) in the same manner as glycogen synthase. In Wnt signaling, GSK3B forms a multimeric complex with APC, AXIN1 and CTNNB1/beta-catenin and phosphorylates the N-terminus of CTNNB1 leading to its degradation mediated by ubiquitin/proteasomes. Phosphorylates JUN at sites proximal to its DNA-binding domain, thereby reducing its affinity for DNA. Phosphorylates NFATC1/NFATC on conserved serine residues promoting NFATC1/NFATC nuclear export, shutting off NFATC1/NFATC gene regulation, and thereby opposing the action of calcineurin. Phosphorylates MAPT/TAU on 'Thr-548', decreasing significantly MAPT/TAU ability to bind and stabilize microtubules. MAPT/TAU is the principal component of neurofibrillary tangles in Alzheimer disease. Plays an important role in ERBB2-dependent stabilization of microtubules at the cell cortex. Phosphorylates MACF1, inhibiting its binding to microtubules which is critical for its role in bulge stem cell migration and skin wound repair. Probably regulates NF-kappa-B (NFKB1) at the transcriptional level and is required for the NF-kappa-B-mediated anti-apoptotic response to TNF-alpha (TNF/TNFA). Negatively regulates replication in pancreatic beta-cells, resulting in apoptosis, loss of beta-cells and diabetes. Through phosphorylation of the anti-apoptotic protein MCL1, may control cell apoptosis in response to growth factors deprivation. Phosphorylates MUC1 in breast cancer cells, decreasing the interaction of MUC1 with CTNNB1/beta-catenin. Is necessary for the establishment of neuronal polarity and axon outgrowth. Phosphorylates MARK2, leading to inhibition of its activity. Phosphorylates SIK1 at 'Thr-182', leading to sustainment of its activity. Phosphorylates ZC3HAV1 which enhances its antiviral activity. Phosphorylates SNAI1, leading to its ubiquitination and proteasomal degradation. Phosphorylates SFPQ at 'Thr-687' upon T-cell activation. Phosphorylates NR1D1 st 'Ser-55' and 'Ser-59' and stabilizes it by protecting it from proteasomal degradation. Regulates the circadian clock via phosphorylation of the major clock components including BMAL1, CLOCK and PER2. Phosphorylates CLOCK AT 'Ser-427' and targets it for proteasomal degradation. Phosphorylates BMAL1 at 'Ser-17' and 'Ser-21' and primes it for ubiquitination and proteasomal degradation. Phosphorylates FBXL2 at 'Thr-404' and primes it for ubiquitination by the SCF(FBXO3) complex and proteasomal degradation. Phosphorylates OGT at 'Ser-3' or 'Ser-4' which positively regulates its activity. Phosphorylates MYCN in neuroblastoma cells which may promote its degradation. Regulates the circadian rhythmicity of hippocampal long-term potentiation and BMAL1 and PER2 expression. Acts as a regulator of autophagy by mediating phosphorylation of KAT5/TIP60 under starvation conditions, activating KAT5/TIP60 acetyltransferase activity and promoting acetylation of key autophagy regulators, such as ULK1 and RUBCNL/Pacer. Negatively regulates extrinsic apoptotic signaling pathway via death domain receptors. Promotes the formation of an anti-apoptotic complex, made of DDX3X, BRIC2 and GSK3B, at death receptors, including TNFRSF10B. The anti-apoptotic function is most effective with weak apoptotic signals and can be overcome by stronger stimulation. Phosphorylates E2F1, promoting the interaction between E2F1 and USP11, stabilizing E2F1 and promoting its activity. Phosphorylates mTORC2 complex component RICTOR at 'Ser-1235' in response to endoplasmic stress, inhibiting mTORC2. Phosphorylates FXR1, promoting FXR1 ubiquitination by the SCF(FBXO4) complex and FXR1 degradation by the proteasome. Phosphorylates interleukin-22 receptor subunit IL22RA1, preventing its proteasomal degradation. This Mus musculus (Mouse) protein is Glycogen synthase kinase-3 beta.